We begin with the raw amino-acid sequence, 248 residues long: uncharacterized protein (248 aa).

The first 23 residues, 1-23 (MLKKIVIGVTATAAFGIGAGALA), serve as a signal peptide directing secretion.

It is found in the cell outer membrane. This is an uncharacterized protein from Coxiella burnetii (strain RSA 493 / Nine Mile phase I).